Consider the following 390-residue polypeptide: tRNA-specific 2-thiouridylase MnmA (390 aa).

ATP is bound by residues 29–36 (GLSGGVDS) and L55. The active-site Nucleophile is the C116. A disulfide bridge connects residues C116 and C225. ATP is bound at residue G141. The tract at residues 175-177 (KDQ) is interaction with tRNA. C225 serves as the catalytic Cysteine persulfide intermediate. The interaction with tRNA stretch occupies residues 330 to 331 (RY).

The protein belongs to the MnmA/TRMU family.

The protein resides in the cytoplasm. It catalyses the reaction S-sulfanyl-L-cysteinyl-[protein] + uridine(34) in tRNA + AH2 + ATP = 2-thiouridine(34) in tRNA + L-cysteinyl-[protein] + A + AMP + diphosphate + H(+). Catalyzes the 2-thiolation of uridine at the wobble position (U34) of tRNA, leading to the formation of s(2)U34. In Prochlorococcus marinus (strain MIT 9515), this protein is tRNA-specific 2-thiouridylase MnmA.